Reading from the N-terminus, the 416-residue chain is Kynureninase (416 aa).

Pyridoxal 5'-phosphate-binding positions include Thr-97, Ser-98, Phe-129–Asp-132, Thr-172, Asp-201, His-204, and Tyr-226. An N6-(pyridoxal phosphate)lysine modification is found at Lys-227. Residues Trp-256 and Thr-282 each contribute to the pyridoxal 5'-phosphate site.

This sequence belongs to the kynureninase family. In terms of assembly, homodimer. Pyridoxal 5'-phosphate is required as a cofactor.

It catalyses the reaction L-kynurenine + H2O = anthranilate + L-alanine + H(+). It carries out the reaction 3-hydroxy-L-kynurenine + H2O = 3-hydroxyanthranilate + L-alanine + H(+). The protein operates within amino-acid degradation; L-kynurenine degradation; L-alanine and anthranilate from L-kynurenine: step 1/1. It functions in the pathway cofactor biosynthesis; NAD(+) biosynthesis; quinolinate from L-kynurenine: step 2/3. In terms of biological role, catalyzes the cleavage of L-kynurenine (L-Kyn) and L-3-hydroxykynurenine (L-3OHKyn) into anthranilic acid (AA) and 3-hydroxyanthranilic acid (3-OHAA), respectively. The sequence is that of Kynureninase from Pseudomonas fluorescens.